Consider the following 462-residue polypeptide: NEDD8-activating enzyme E1 catalytic subunit (462 aa).

An N-acetylalanine modification is found at Ala-2. The segment at His-53–Cys-70 is interaction with UBE2M N-terminus. ATP-binding positions include Asp-100–Lys-124 and Ile-148–Ala-171. Interaction with UBE2M N-terminus stretches follow at residues Arg-157–Ile-161 and Pro-192–Met-217. Residues Leu-227–Pro-229 form an interaction with NEDD8 region. Residue Cys-237 is the Glycyl thioester intermediate of the active site. 2 interaction with NAE1 regions span residues Met-242–His-248 and Tyr-292–Arg-295. The interval Ile-331–Pro-338 is interaction with UBE2M N-terminus. An interaction with NEDD8 region spans residues Tyr-352–Glu-357. The interval Ser-368 to Thr-462 is interaction with UBE2M core domain.

It belongs to the ubiquitin-activating E1 family. UBA3 subfamily. As to quaternary structure, heterodimer of UBA3 and NAE1. Interacts with NEDD8, UBE2F and UBE2M. Binds ESR1 and ESR2 with bound steroid ligand. Interacts with TBATA. As to expression, ubiquitously expressed.

It carries out the reaction ATP + [NEDD8 protein] + [E1 NEDD8-activating enzyme]-L-cysteine = AMP + diphosphate + [E1 NEDD8-activating enzyme]-S-[NEDD8 protein]-yl-L-cysteine.. It functions in the pathway protein modification; protein neddylation. With respect to regulation, binding of TP53BP2 to the regulatory subunit NAE1 decreases activity. Its function is as follows. Catalytic subunit of the dimeric UBA3-NAE1 E1 enzyme. E1 activates NEDD8 by first adenylating its C-terminal glycine residue with ATP, thereafter linking this residue to the side chain of the catalytic cysteine, yielding a NEDD8-UBA3 thioester and free AMP. E1 finally transfers NEDD8 to the catalytic cysteine of UBE2M. Down-regulates steroid receptor activity. Necessary for cell cycle progression. The polypeptide is NEDD8-activating enzyme E1 catalytic subunit (Uba3) (Rattus norvegicus (Rat)).